The chain runs to 263 residues: Type III pantothenate kinase (263 aa).

Asp9 to Lys16 contacts ATP. Residues Tyr103 and Gly110 to Arg113 contribute to the substrate site. The Proton acceptor role is filled by Asp112. Asp134 is a K(+) binding site. Thr137 contacts ATP. A substrate-binding site is contributed by Thr190.

Belongs to the type III pantothenate kinase family. Homodimer. The cofactor is NH4(+). K(+) is required as a cofactor.

The protein resides in the cytoplasm. It catalyses the reaction (R)-pantothenate + ATP = (R)-4'-phosphopantothenate + ADP + H(+). Its pathway is cofactor biosynthesis; coenzyme A biosynthesis; CoA from (R)-pantothenate: step 1/5. Catalyzes the phosphorylation of pantothenate (Pan), the first step in CoA biosynthesis. The polypeptide is Type III pantothenate kinase (Desulfovibrio desulfuricans (strain ATCC 27774 / DSM 6949 / MB)).